A 428-amino-acid polypeptide reads, in one-letter code: Adenylosuccinate synthetase 1 (428 aa).

Residues 12–18 and 40–42 each bind GTP; these read GDEGKGK and GHT. The Proton acceptor role is filled by Asp13. Positions 13 and 40 each coordinate Mg(2+). IMP contacts are provided by residues 13-16, 38-41, Thr133, Arg147, Asn224, Thr239, and Arg303; these read DEGK and NAGH. His41 (proton donor) is an active-site residue. Residue 299-305 coordinates substrate; that stretch reads TTTGRRR. GTP-binding positions include Arg305, 331-333, and 413-415; these read KLD and GVG.

Belongs to the adenylosuccinate synthetase family. As to quaternary structure, homodimer. The cofactor is Mg(2+).

The protein localises to the cytoplasm. It catalyses the reaction IMP + L-aspartate + GTP = N(6)-(1,2-dicarboxyethyl)-AMP + GDP + phosphate + 2 H(+). Its pathway is purine metabolism; AMP biosynthesis via de novo pathway; AMP from IMP: step 1/2. In terms of biological role, plays an important role in the de novo pathway and in the salvage pathway of purine nucleotide biosynthesis. Catalyzes the first committed step in the biosynthesis of AMP from IMP. The chain is Adenylosuccinate synthetase 1 from Laccaria bicolor (strain S238N-H82 / ATCC MYA-4686) (Bicoloured deceiver).